The following is a 379-amino-acid chain: Glutamate 5-kinase (379 aa).

Lysine 19 is an ATP binding site. Substrate contacts are provided by serine 59, aspartate 146, and asparagine 158. ATP is bound by residues 178–179 and 220–226; these read TD and TGGMATK. Positions 285–363 constitute a PUA domain; the sequence is SGDIIIDDGA…KDIISILGHD (79 aa).

Belongs to the glutamate 5-kinase family.

It is found in the cytoplasm. The enzyme catalyses L-glutamate + ATP = L-glutamyl 5-phosphate + ADP. Its pathway is amino-acid biosynthesis; L-proline biosynthesis; L-glutamate 5-semialdehyde from L-glutamate: step 1/2. Functionally, catalyzes the transfer of a phosphate group to glutamate to form L-glutamate 5-phosphate. The sequence is that of Glutamate 5-kinase from Vibrio campbellii (strain ATCC BAA-1116).